The following is a 750-amino-acid chain: Photosystem I P700 chlorophyll a apoprotein A1 (750 aa).

8 consecutive transmembrane segments (helical) span residues Val70–Ala93, Leu156–His179, Leu195–Leu219, Ile291–Tyr309, Trp346–Tyr369, Leu385–Val411, Ala433–His455, and Phe531–Leu549. Cys573 and Cys582 together coordinate [4Fe-4S] cluster. 2 helical membrane-spanning segments follow: residues His589 to Trp610 and Leu664 to Phe686. His675 contacts chlorophyll a'. Met683 and Tyr691 together coordinate chlorophyll a. A phylloquinone-binding site is contributed by Trp692. The chain crosses the membrane as a helical span at residues Ala724–Ala744.

It belongs to the PsaA/PsaB family. As to quaternary structure, the PsaA/B heterodimer binds the P700 chlorophyll special pair and subsequent electron acceptors. PSI consists of a core antenna complex that captures photons, and an electron transfer chain that converts photonic excitation into a charge separation. The eukaryotic PSI reaction center is composed of at least 11 subunits. P700 is a chlorophyll a/chlorophyll a' dimer, A0 is one or more chlorophyll a, A1 is one or both phylloquinones and FX is a shared 4Fe-4S iron-sulfur center. serves as cofactor.

The protein resides in the plastid. It localises to the chloroplast thylakoid membrane. The catalysed reaction is reduced [plastocyanin] + hnu + oxidized [2Fe-2S]-[ferredoxin] = oxidized [plastocyanin] + reduced [2Fe-2S]-[ferredoxin]. PsaA and PsaB bind P700, the primary electron donor of photosystem I (PSI), as well as the electron acceptors A0, A1 and FX. PSI is a plastocyanin-ferredoxin oxidoreductase, converting photonic excitation into a charge separation, which transfers an electron from the donor P700 chlorophyll pair to the spectroscopically characterized acceptors A0, A1, FX, FA and FB in turn. Oxidized P700 is reduced on the lumenal side of the thylakoid membrane by plastocyanin. The sequence is that of Photosystem I P700 chlorophyll a apoprotein A1 from Drimys granadensis.